The following is a 258-amino-acid chain: MENTATAAKAKLEVKNLNFYYGKFHAIRNVNMSIRENKVTAFIGPSGCGKSTLLRTFNRMFELYPGQRAEGEILLDGENLLTSKTDISLIRAKVGMVFQKPTPFPMSIYDNIAFGVRLFERLSKGEMDERVEWALSKAALWNEVKDKLHQSGNSLSGGQQQRLCIARGVAIKPEVLLLDEPCSALDPISTAKIEELIAELKHEYTVVIVTHNMQQAARCSDYTAYMYLGELMEYGATDQIFVKPARKETEDYITGRFG.

The region spanning 12 to 253 (LEVKNLNFYY…PARKETEDYI (242 aa)) is the ABC transporter domain. 44–51 (GPSGCGKS) is an ATP binding site.

The protein belongs to the ABC transporter superfamily. Phosphate importer (TC 3.A.1.7) family. In terms of assembly, the complex is composed of two ATP-binding proteins (PstB), two transmembrane proteins (PstC and PstA) and a solute-binding protein (PstS).

It is found in the cell inner membrane. The enzyme catalyses phosphate(out) + ATP + H2O = ADP + 2 phosphate(in) + H(+). Part of the ABC transporter complex PstSACB involved in phosphate import. Responsible for energy coupling to the transport system. The polypeptide is Phosphate import ATP-binding protein PstB (Bordetella pertussis (strain Tohama I / ATCC BAA-589 / NCTC 13251)).